Consider the following 680-residue polypeptide: Zinc finger protein 334 (680 aa).

Residues 10–81 (VSFQDLTVNF…EEFSNQNYPD (72 aa)) enclose the KRAB domain. 14 C2H2-type zinc fingers span residues 237 to 259 (NECN…QRIH), 265 to 287 (YVCS…RRIH), 293 to 315 (YECS…QKIH), 321 to 343 (YECN…FRSH), 349 to 371 (YECK…QRTH), 377 to 399 (NECK…QRIH), 405 to 427 (YECS…RRSH), 433 to 455 (YECS…QITH), 461 to 483 (YECN…QRTH), 544 to 566 (YECN…QRTH), 572 to 594 (YECN…QRTH), 600 to 622 (YECN…RRIH), 628 to 650 (YECN…QKIH), and 656 to 678 (YECN…QKSH).

Belongs to the krueppel C2H2-type zinc-finger protein family.

The protein resides in the nucleus. Functionally, may be involved in transcriptional regulation. The protein is Zinc finger protein 334 (ZNF334) of Homo sapiens (Human).